Consider the following 142-residue polypeptide: Transcription antitermination protein NusB (142 aa).

It belongs to the NusB family.

Its function is as follows. Involved in transcription antitermination. Required for transcription of ribosomal RNA (rRNA) genes. Binds specifically to the boxA antiterminator sequence of the ribosomal RNA (rrn) operons. This Trichlorobacter lovleyi (strain ATCC BAA-1151 / DSM 17278 / SZ) (Geobacter lovleyi) protein is Transcription antitermination protein NusB.